A 615-amino-acid polypeptide reads, in one-letter code: AP-1-like transcription factor yap1 (615 aa).

The span at 27-50 shows a compositional bias: polar residues; that stretch reads SSNNPTQKQQTVTHNSEANQNLNH. Disordered regions lie at residues 27-84 and 99-180; these read SSNN…EDSP and NESL…RKEK. The short motif at 35–42 is the Bipartite nuclear localization signal element; it reads QQTVTHNS. Residues 52 to 67 show a composition bias toward low complexity; the sequence is PGHASSGSFSVSPPSG. The Bipartite nuclear localization signal signature appears at 68–75; sequence LDGSVNQS. The segment covering 118–147 has biased composition (basic and acidic residues); sequence PGDKRKDIDGQVNDKEDSGKKRRESDEKAA. One can recognise a bZIP domain in the interval 157 to 220; the sequence is SEPTSKRKAQ…ERLQLELKEY (64 aa). Residues 162 to 183 are basic motif; sequence KRKAQNRAAQRAFRERKEKHLK. Positions 185–192 are leucine-zipper; sequence LEAKVEEL. The interval 214–364 is transcription activation 1; sequence QLELKEYRKR…RGYQVNSSYS (151 aa). The span at 270 to 294 shows a compositional bias: polar residues; sequence LFTNTQTSKSNQNKAKDNPTATPRS. The tract at residues 270-416 is disordered; that stretch reads LFTNTQTSKS…AVKATESSTP (147 aa). Residues 289–301 form a n-CRD region; that stretch reads TATPRSEAQVPGV. A compositionally biased stretch (low complexity) spans 310-321; sequence SSPNGLSNGPSP. Polar residues-rich tracts occupy residues 322–344 and 358–369; these read AKST…SGTL and QVNSSYSASTKQ. Positions 372–394 are enriched in low complexity; that stretch reads HDTPSSDSPSSSSDSHQSQLLSS. The interval 409–508 is transcription activation 2; it reads KATESSTPHA…SQDFGTFFDD (100 aa). 3 cysteine pairs are disulfide-bonded: Cys562–Cys586, Cys562–Cys595, and Cys586–Cys595. The tract at residues 562-595 is c-CRD; it reads CNKIWDRLQSMEKFRNGEIDVDNLCSELRTKARC. The Nuclear export signal motif lies at 580-587; that stretch reads IDVDNLCS.

The protein belongs to the bZIP family. YAP subfamily. In terms of processing, depending on the oxidative stress inducing agent, yap1 can undergo two distinct conformational changes, both involving disulfide bond formation, and both masking the nuclear export signal, thus abolishing nuclear export.

It localises to the nucleus. The protein resides in the cytoplasm. Its function is as follows. Transcription activator involved in oxidative stress response and redox homeostasis. Regulates the transcription of genes encoding antioxidant enzymes and components of the cellular thiol-reducing pathways, including thioredoxin peroxidase (aspF3), cytochrome peroxidase, and the protein AFUA_3G00730, which appears to belong to the glutathione S-transferase family. Proteins of the protein degradation pathway are also regulated by yap1, as well the p-nitroreductase family protein AFUA_5G09910. May be involved in antifungal resistance to voriconazole. The protein is AP-1-like transcription factor yap1 of Aspergillus fumigatus (strain ATCC MYA-4609 / CBS 101355 / FGSC A1100 / Af293) (Neosartorya fumigata).